Consider the following 442-residue polypeptide: Lipoyl synthase, apicoplast (442 aa).

The N-terminal stretch at 1–23 (MRVLTPSLYIYAFFIFCVRFKCG) is a signal peptide. The disordered stretch occupies residues 104–154 (LGEHQLKGKRKESATNVEKEKKEKEQQEERLPVPKVGNKMPEKKPDWFHVP). Basic and acidic residues predominate over residues 114-135 (KESATNVEKEKKEKEQQEERLP). [4Fe-4S] cluster-binding residues include Cys-177, Cys-182, Cys-188, Cys-203, Cys-207, Cys-210, and Ser-418. The region spanning 189–407 (WNIGTATIML…KEEGMKMGFK (219 aa)) is the Radical SAM core domain.

Belongs to the radical SAM superfamily. Lipoyl synthase family. Requires [4Fe-4S] cluster as cofactor.

It localises to the plastid. Its subcellular location is the apicoplast. It catalyses the reaction [[Fe-S] cluster scaffold protein carrying a second [4Fe-4S](2+) cluster] + N(6)-octanoyl-L-lysyl-[protein] + 2 oxidized [2Fe-2S]-[ferredoxin] + 2 S-adenosyl-L-methionine + 4 H(+) = [[Fe-S] cluster scaffold protein] + N(6)-[(R)-dihydrolipoyl]-L-lysyl-[protein] + 4 Fe(3+) + 2 hydrogen sulfide + 2 5'-deoxyadenosine + 2 L-methionine + 2 reduced [2Fe-2S]-[ferredoxin]. Its pathway is protein modification; protein lipoylation via endogenous pathway; protein N(6)-(lipoyl)lysine from octanoyl-[acyl-carrier-protein]: step 2/2. Catalyzes the radical-mediated insertion of two sulfur atoms into the C-6 and C-8 positions of the octanoyl moiety bound to the lipoyl domains of lipoate-dependent enzymes, thereby converting the octanoylated domains into lipoylated derivatives. This Plasmodium knowlesi (strain H) protein is Lipoyl synthase, apicoplast.